Consider the following 303-residue polypeptide: Aspartate carbamoyltransferase catalytic subunit (303 aa).

Residues arginine 54 and threonine 55 each contribute to the carbamoyl phosphate site. Residue lysine 82 coordinates L-aspartate. Residues arginine 104, histidine 132, and glutamine 135 each coordinate carbamoyl phosphate. Residues arginine 165 and arginine 221 each coordinate L-aspartate. Carbamoyl phosphate is bound by residues glycine 261 and proline 262.

The protein belongs to the aspartate/ornithine carbamoyltransferase superfamily. ATCase family. Heterododecamer (2C3:3R2) of six catalytic PyrB chains organized as two trimers (C3), and six regulatory PyrI chains organized as three dimers (R2).

It catalyses the reaction carbamoyl phosphate + L-aspartate = N-carbamoyl-L-aspartate + phosphate + H(+). Its pathway is pyrimidine metabolism; UMP biosynthesis via de novo pathway; (S)-dihydroorotate from bicarbonate: step 2/3. Its function is as follows. Catalyzes the condensation of carbamoyl phosphate and aspartate to form carbamoyl aspartate and inorganic phosphate, the committed step in the de novo pyrimidine nucleotide biosynthesis pathway. This Koribacter versatilis (strain Ellin345) protein is Aspartate carbamoyltransferase catalytic subunit.